We begin with the raw amino-acid sequence, 295 residues long: Translational activator of cytochrome c oxidase 1 (295 aa).

Lysine 162 bears the N6-acetyllysine mark. Residues 190–225 (VEDREKKAVNLERALELAIEAGAEDVREAEDEEEEK) are a coiled coil.

It belongs to the TACO1 family.

The protein resides in the mitochondrion. Functionally, acts as a translational activator of mitochondrially-encoded cytochrome c oxidase 1. This chain is Translational activator of cytochrome c oxidase 1, found in Rattus norvegicus (Rat).